We begin with the raw amino-acid sequence, 462 residues long: Argininosuccinate lyase (462 aa).

The protein belongs to the lyase 1 family. Argininosuccinate lyase subfamily.

The protein localises to the cytoplasm. It carries out the reaction 2-(N(omega)-L-arginino)succinate = fumarate + L-arginine. It functions in the pathway amino-acid biosynthesis; L-arginine biosynthesis; L-arginine from L-ornithine and carbamoyl phosphate: step 3/3. In Lachnoclostridium phytofermentans (strain ATCC 700394 / DSM 18823 / ISDg) (Clostridium phytofermentans), this protein is Argininosuccinate lyase.